The chain runs to 446 residues: Tetratricopeptide repeat protein 23 (446 aa).

5 TPR repeats span residues 45-78 (LRLSEEKAKSYASSHEYKKALHELVHCMALTRIC), 137-170 (VELFHTLGQALLSLQKFKEASKNLTKAEILSKEM), 186-219 (ARIKLSFAQVYQGQKKSKEALPHYQEALEYTEIS), 310-347 (TAKFLSIQDDYCHFLQVTGQDEKATSIFRESLEAKVAV), and 356-389 (AETYRLLGVADLAQGNQTGAHKKLKKCLQIQTLL). Residues 410 to 446 (APEVPARPRPSPGAKAAFCAGGRPYSVPGRTRPSAAD) are disordered.

Associated with the EvC complex composed of EFCAB7, IQCE, EVC2 and EVC.

Its subcellular location is the cell projection. It is found in the cilium. Participates positively in the ciliary Hedgehog (Hh) signaling. The polypeptide is Tetratricopeptide repeat protein 23 (TTC23) (Bos taurus (Bovine)).